Reading from the N-terminus, the 501-residue chain is Putative glycogen synthase kinase-3 homolog (501 aa).

The 285-residue stretch at 33–317 (YTDAKVVGNG…PLMGCAHPFF (285 aa)) folds into the Protein kinase domain. ATP contacts are provided by residues 39–47 (VGNGSFGVV) and Lys-62. The Proton acceptor role is filled by Asp-158. Phosphotyrosine is present on Tyr-193. Disordered stretches follow at residues 355–427 (LLPR…HVAV) and 446–501 (SYAV…EDEN). Basic and acidic residues predominate over residues 381–390 (ESPRKTEDSQ). Acidic residues-rich tracts occupy residues 451 to 471 (EDAE…DYDD) and 482 to 501 (DDMD…EDEN).

Belongs to the protein kinase superfamily. CMGC Ser/Thr protein kinase family. GSK-3 subfamily. Phosphorylation on Tyr-193 is necessary for the activity.

It carries out the reaction L-seryl-[tau protein] + ATP = O-phospho-L-seryl-[tau protein] + ADP + H(+). The catalysed reaction is L-threonyl-[tau protein] + ATP = O-phospho-L-threonyl-[tau protein] + ADP + H(+). The chain is Putative glycogen synthase kinase-3 homolog (gskt) from Drosophila melanogaster (Fruit fly).